A 314-amino-acid chain; its full sequence is Methionyl-tRNA formyltransferase (314 aa).

(6S)-5,6,7,8-tetrahydrofolate is bound at residue 113 to 116; it reads SILP.

The protein belongs to the Fmt family.

The catalysed reaction is L-methionyl-tRNA(fMet) + (6R)-10-formyltetrahydrofolate = N-formyl-L-methionyl-tRNA(fMet) + (6S)-5,6,7,8-tetrahydrofolate + H(+). In terms of biological role, attaches a formyl group to the free amino group of methionyl-tRNA(fMet). The formyl group appears to play a dual role in the initiator identity of N-formylmethionyl-tRNA by promoting its recognition by IF2 and preventing the misappropriation of this tRNA by the elongation apparatus. This chain is Methionyl-tRNA formyltransferase, found in Photobacterium profundum (strain SS9).